The sequence spans 1379 residues: ABC multidrug transporter MDR2 (1379 aa).

The chain crosses the membrane as a helical span at residues 65–85; the sequence is IALIVIGTIAGIGAGIPFPLL. The 299-residue stretch at 69–367 folds into the ABC transmembrane type-1 1 domain; it reads VIGTIAGIGA…MAPFMHIFAS (299 aa). N97 carries N-linked (GlcNAc...) asparagine glycosylation. A run of 5 helical transmembrane segments spans residues 119-139, 193-213, 215-235, 301-321, and 336-356; these read VLQV…HTGC, KVGL…VAFL, VATI…MAFG, IQFG…FWQG, and VSVG…FVLS. The ABC transporter 1 domain occupies 403–682; that stretch reads IELQDVTFNY…DGVYAGMVRL (280 aa). 438-445 lines the ATP pocket; it reads GTSGSGKS. Residues N552 and N633 are each glycosylated (N-linked (GlcNAc...) asparagine). A disordered region spans residues 738–758; it reads YMPEEADSLPTEPENEKEKPK. 4 helical membrane-spanning segments follow: residues 781-801, 820-840, 901-921, and 922-942; these read LGLI…VIFG, GMLF…AVIV, IGVL…SHVI, and AWRI…SGVL. The 288-residue stretch at 781-1068 folds into the ABC transmembrane type-1 2 domain; that stretch reads LGLITSIMIG…MFALVPDISK (288 aa). A glycan (N-linked (GlcNAc...) asparagine) is linked at N989. The next 2 helical transmembrane spans lie at 1008–1028 and 1032–1052; these read FWLS…YWWG and ILAG…LLFS. An ABC transporter 2 domain is found at 1135–1374; that stretch reads VQFRNVHFRY…CESYRANVIH (240 aa). Residue 1170–1177 participates in ATP binding; sequence GPSGSGKS.

It belongs to the ABC transporter superfamily. ABCB family. Multidrug resistance exporter (TC 3.A.1.201) subfamily.

The protein localises to the cell membrane. Pleiotropic ABC efflux transporter that may be involved in the modulation susceptibility to a wide range of unrelated cytotoxic compounds. This Trichophyton equinum (strain ATCC MYA-4606 / CBS 127.97) (Horse ringworm fungus) protein is ABC multidrug transporter MDR2.